A 398-amino-acid polypeptide reads, in one-letter code: Cytochrome P450 165B3 (398 aa).

Heme is bound at residue Cys347.

This sequence belongs to the cytochrome P450 family. Requires heme as cofactor.

It functions in the pathway antibiotic biosynthesis; vancomycin biosynthesis. In terms of biological role, involved in the coupling of aromatic side chains of the heptapeptide of vancomycin. The chain is Cytochrome P450 165B3 (cyp165B3) from Amycolatopsis orientalis (Nocardia orientalis).